Here is a 431-residue protein sequence, read N- to C-terminus: ETS domain-containing protein Elk-4 (431 aa).

The segment at residues 5–85 is a DNA-binding region (ETS); that stretch reads ITLWQFLLQL…NGQKFVYKFV (81 aa). A disordered region spans residues 114 to 139; it reads SSSSKDVENGGKDKPPQPGAKTSSRN. Residues 118-128 are compositionally biased toward basic and acidic residues; that stretch reads KDVENGGKDKP. Residue Lys-167 forms a Glycyl lysine isopeptide (Lys-Gly) (interchain with G-Cter in SUMO2) linkage. Ser-180 carries the phosphoserine modification. Disordered stretches follow at residues 251–282, 294–323, and 411–431; these read TTPP…DTDI, ENLS…KKPK, and TLSG…LQKT. Residues 261–273 are compositionally biased toward pro residues; sequence LQEPPRTPSPPLS. The segment covering 299–313 has biased composition (basic and acidic residues); sequence EPKDQDSVLLEKDKV.

It belongs to the ETS family. As to quaternary structure, interacts with SIRT7.

It localises to the nucleus. Involved in both transcriptional activation and repression. Interaction with SIRT7 leads to recruitment and stabilization of SIRT7 at promoters, followed by deacetylation of histone H3 at 'Lys-18' (H3K18Ac) and subsequent transcription repression. Forms a ternary complex with the serum response factor (SRF). Requires DNA-bound SRF for ternary complex formation and makes extensive DNA contacts to the 5'side of SRF, but does not bind DNA autonomously. The sequence is that of ETS domain-containing protein Elk-4 (ELK4) from Homo sapiens (Human).